The sequence spans 938 residues: MFKKLFGDPNARKLKRFQPLVAEINLLAEDFANLTDEALAQKTVEFRAKLDKANSDEETEEILDEILPEAFAVVREAAWRVLQMRHYDVQLLGGIVLHKGQIAEMRTGEGKTLVATLPAYLNGLTGKGVHVVTVNDYLARRDAEWMGQVHRFLGLTVGLIQSSMGPAEKIENYRCDITYTTNSELGFDYLRDNMATTIQEVVQRPFNYCIIDEVDSILVDEARTPLIISGQIERPTEKYLQAAEIAKQLVPQVEEDGPGDYEVDEKARNVLMTDEGFAKAEQLLGVTDLYDEQNPWAHYIFNAVKAKELFKKDVNYIVRGDEVVIVDEFTGRIMPGRRWSDGLHQAIEAQEGVTIQKETQTLANITYQNFFLLYPKLSGMTGTAKTEETEFEKVYNLEVTIIPTNRPTKRQDLADVVYKNEKAKWRAVAEECAQMHETGRPVLVGTTSVEKSEIISAYLHELGIPHNLLNARPENVEKESEIVAQAGRKGAVTIATNMAGRGTDIILGGNSEYMARLKMREYFMPQIVKPEDEGNFAIAGSGKNSGGQGFDTNNKQKKKTWKTTLDIYPTELPTDLEQQLKEAVKFAVDQYGNQSLTELEAEEKLAIASENAPTADPVVQKLRTVYHAIEKTYHDLTSVEHDEVIQNGGLHVIGTERHESRRIDNQLRGRAGRQGDPGSTRFFLSLEDNLLRIFGGDRVAGLMNAFRVEEDMPIESKMLTNSLEGAQKKVETFYYDARKQVFEYDEVMNNQRRAIYAERRRVLEGQDLKEQVIQYAEKTMSEIVEAYVNPELPPEEWKLDKLLDKAKEFIYLLEDLEPKDIEDMTVPEIKTFLHEEVRKAYDLKEAQVEKSQPGLMRQAERFFILQQIDTLWREHLQAIDALRESVGLRGYGQKDPLIEYKQEGYEMFLEMMIDIRRNVVYSLFQFQPQRQPQQPQAV.

Residues Q90, 108-112 (GEGKT), and D504 contribute to the ATP site.

The protein belongs to the SecA family. As to quaternary structure, monomer and homodimer. Part of the essential Sec protein translocation apparatus which comprises SecA, SecYEG and auxiliary proteins SecDF. Other proteins may also be involved.

The protein localises to the cell inner membrane. Its subcellular location is the cellular thylakoid membrane. It is found in the cytoplasm. The enzyme catalyses ATP + H2O + cellular proteinSide 1 = ADP + phosphate + cellular proteinSide 2.. In terms of biological role, part of the Sec protein translocase complex. Interacts with the SecYEG preprotein conducting channel. Has a central role in coupling the hydrolysis of ATP to the transfer of proteins into and across the cell membrane, serving as an ATP-driven molecular motor driving the stepwise translocation of polypeptide chains across the membrane. Functionally, probably participates in protein translocation into and across both the cytoplasmic and thylakoid membranes in cyanobacterial cells. This Picosynechococcus sp. (strain ATCC 27264 / PCC 7002 / PR-6) (Agmenellum quadruplicatum) protein is Protein translocase subunit SecA.